The sequence spans 148 residues: Nucleoside diphosphate kinase (148 aa).

6 residues coordinate ATP: K9, F57, R85, T91, R102, and N112. T91 carries the phosphothreonine modification. H115 acts as the Pros-phosphohistidine intermediate in catalysis. S122 is subject to Phosphoserine.

It belongs to the NDK family. As to quaternary structure, homotetramer. It depends on Mg(2+) as a cofactor.

The protein resides in the cytoplasm. It carries out the reaction a 2'-deoxyribonucleoside 5'-diphosphate + ATP = a 2'-deoxyribonucleoside 5'-triphosphate + ADP. It catalyses the reaction a ribonucleoside 5'-diphosphate + ATP = a ribonucleoside 5'-triphosphate + ADP. Its function is as follows. Major role in the synthesis of nucleoside triphosphates other than ATP. The ATP gamma phosphate is transferred to the NDP beta phosphate via a ping-pong mechanism, using a phosphorylated active-site intermediate. This chain is Nucleoside diphosphate kinase, found in Bacillus cereus (strain ATCC 14579 / DSM 31 / CCUG 7414 / JCM 2152 / NBRC 15305 / NCIMB 9373 / NCTC 2599 / NRRL B-3711).